A 470-amino-acid polypeptide reads, in one-letter code: Aspartate-semialdehyde dehydrogenase 1 (470 aa).

The NAD(+) site is built by Thr145 and Lys171. The active site involves Asp243. Position 245 (Gly245) interacts with NAD(+). Cys277 is an active-site residue. Glu371 contributes to the NAD(+) binding site.

It belongs to the aldehyde dehydrogenase family.

It catalyses the reaction L-aspartate 4-semialdehyde + NAD(+) + H2O = L-aspartate + NADH + 2 H(+). Functionally, dehydrogenase involved in the degradation of canavanine, the delta-oxa-analog of arginine, allowing growth on canavanine as sole nitrogen and carbon source. Probably catalyzes the NAD(+)-dependent oxidation of L-aspartate-semialdehyde to L-aspartate. The chain is Aspartate-semialdehyde dehydrogenase 1 from Pseudomonas canavaninivorans.